The following is a 103-amino-acid chain: Large ribosomal subunit protein bL21 (103 aa).

It belongs to the bacterial ribosomal protein bL21 family. In terms of assembly, part of the 50S ribosomal subunit. Contacts protein L20.

Functionally, this protein binds to 23S rRNA in the presence of protein L20. In Salmonella agona (strain SL483), this protein is Large ribosomal subunit protein bL21.